A 147-amino-acid polypeptide reads, in one-letter code: Peptide methionine sulfoxide reductase MsrA (147 aa).

Cys10 is a catalytic residue.

Belongs to the MsrA Met sulfoxide reductase family.

The catalysed reaction is L-methionyl-[protein] + [thioredoxin]-disulfide + H2O = L-methionyl-(S)-S-oxide-[protein] + [thioredoxin]-dithiol. It carries out the reaction [thioredoxin]-disulfide + L-methionine + H2O = L-methionine (S)-S-oxide + [thioredoxin]-dithiol. Its function is as follows. Has an important function as a repair enzyme for proteins that have been inactivated by oxidation. Catalyzes the reversible oxidation-reduction of methionine sulfoxide in proteins to methionine. The sequence is that of Peptide methionine sulfoxide reductase MsrA from Pelagibacter ubique (strain HTCC1062).